The following is a 309-amino-acid chain: Porphobilinogen deaminase (309 aa).

Position 240 is an S-(dipyrrolylmethanemethyl)cysteine (Cys-240).

It belongs to the HMBS family. As to quaternary structure, monomer. Requires dipyrromethane as cofactor.

It carries out the reaction 4 porphobilinogen + H2O = hydroxymethylbilane + 4 NH4(+). It functions in the pathway porphyrin-containing compound metabolism; protoporphyrin-IX biosynthesis; coproporphyrinogen-III from 5-aminolevulinate: step 2/4. Functionally, tetrapolymerization of the monopyrrole PBG into the hydroxymethylbilane pre-uroporphyrinogen in several discrete steps. The polypeptide is Porphobilinogen deaminase (Brevibacillus brevis (strain 47 / JCM 6285 / NBRC 100599)).